Reading from the N-terminus, the 319-residue chain is Acetyl-coenzyme A carboxylase carboxyl transferase subunit alpha (319 aa).

The 262-residue stretch at 35-296 (NIDEEVHRLR…KAQLLEDLAD (262 aa)) folds into the CoA carboxyltransferase C-terminal domain.

It belongs to the AccA family. As to quaternary structure, acetyl-CoA carboxylase is a heterohexamer composed of biotin carboxyl carrier protein (AccB), biotin carboxylase (AccC) and two subunits each of ACCase subunit alpha (AccA) and ACCase subunit beta (AccD).

The protein resides in the cytoplasm. It carries out the reaction N(6)-carboxybiotinyl-L-lysyl-[protein] + acetyl-CoA = N(6)-biotinyl-L-lysyl-[protein] + malonyl-CoA. It functions in the pathway lipid metabolism; malonyl-CoA biosynthesis; malonyl-CoA from acetyl-CoA: step 1/1. Its function is as follows. Component of the acetyl coenzyme A carboxylase (ACC) complex. First, biotin carboxylase catalyzes the carboxylation of biotin on its carrier protein (BCCP) and then the CO(2) group is transferred by the carboxyltransferase to acetyl-CoA to form malonyl-CoA. The polypeptide is Acetyl-coenzyme A carboxylase carboxyl transferase subunit alpha (Salmonella arizonae (strain ATCC BAA-731 / CDC346-86 / RSK2980)).